A 163-amino-acid chain; its full sequence is MINNVVLVGRMTRDAELRYTPSNQAVATFSLAVNRNFKNQSGEREADFINCVIWRQQAENLANWAKKGALVGITGRIQTRNYENQQGQRVYVTEVVAESFQLLESRATREGGSPNSYNNGGYNNAPSNNSYSASSQQTPNFSRDESPFGNSNPMDISDDDLPF.

The 104-residue stretch at 1-104 (MINNVVLVGR…VVAESFQLLE (104 aa)) folds into the SSB domain. A disordered region spans residues 106–163 (RATREGGSPNSYNNGGYNNAPSNNSYSASSQQTPNFSRDESPFGNSNPMDISDDDLPF). Residues 111-135 (GGSPNSYNNGGYNNAPSNNSYSASS) are compositionally biased toward low complexity. An Important for interaction with partner proteins motif is present at residues 158 to 163 (DDDLPF).

As to quaternary structure, homotetramer.

In terms of biological role, plays an important role in DNA replication, recombination and repair. Binds to ssDNA and to an array of partner proteins to recruit them to their sites of action during DNA metabolism. The polypeptide is Single-stranded DNA-binding protein 1 (ssb1) (Streptococcus agalactiae serotype III (strain NEM316)).